Here is a 97-residue protein sequence, read N- to C-terminus: MKIVRGALAGTLESSDLLVRISPKEDGLELVLNSEVIHQFGPHIEKVARDCLARLGITEALVVIEDKGALDCVVAARVQTAISRAVDEWNPDWSALS.

O-(phosphoribosyl dephospho-coenzyme A)serine is present on serine 14.

This sequence belongs to the CitD family. In terms of assembly, oligomer with a subunit composition of (alpha,beta,gamma)6.

The protein localises to the cytoplasm. In terms of biological role, covalent carrier of the coenzyme of citrate lyase. The polypeptide is Citrate lyase acyl carrier protein (Rhodopseudomonas palustris (strain BisA53)).